A 456-amino-acid chain; its full sequence is Glycerol-3-phosphate acyltransferase 4 (456 aa).

The first 37 residues, 1-37 (MFLLLPFDSLIVSLLGISLTVLFTLLLVFIIVPAVFG), serve as a signal peptide directing secretion. The next 2 helical transmembrane spans lie at 156 to 176 (ISLRLTVLWGLGVLIRYCLLL) and 180 to 200 (IALAFTGISLLVVGTTMVGYL). N-linked (GlcNAc...) asparagine glycosylation occurs at asparagine 247. Positions 248-253 (HTSPID) match the HXXXXD motif motif. Residues asparagine 327, asparagine 328, and asparagine 362 are each glycosylated (N-linked (GlcNAc...) asparagine).

This sequence belongs to the 1-acyl-sn-glycerol-3-phosphate acyltransferase family.

The protein localises to the endoplasmic reticulum membrane. It carries out the reaction sn-glycerol 3-phosphate + an acyl-CoA = a 1-acyl-sn-glycero-3-phosphate + CoA. It catalyses the reaction dodecanoyl-CoA + sn-glycerol 3-phosphate = 1-dodecanoyl-sn-glycerol 3-phosphate + CoA. The catalysed reaction is sn-glycerol 3-phosphate + hexadecanoyl-CoA = 1-hexadecanoyl-sn-glycero-3-phosphate + CoA. The enzyme catalyses sn-glycerol 3-phosphate + octadecanoyl-CoA = 1-octadecanoyl-sn-glycero-3-phosphate + CoA. It carries out the reaction sn-glycerol 3-phosphate + (9Z)-octadecenoyl-CoA = 1-(9Z-octadecenoyl)-sn-glycero-3-phosphate + CoA. It catalyses the reaction (9Z,12Z)-octadecadienoyl-CoA + sn-glycerol 3-phosphate = 1-(9Z,12Z)-octadecadienoyl-sn-glycero-3-phosphate + CoA. The protein operates within phospholipid metabolism; CDP-diacylglycerol biosynthesis; CDP-diacylglycerol from sn-glycerol 3-phosphate: step 1/3. In terms of biological role, converts glycerol-3-phosphate to 1-acyl-sn-glycerol-3-phosphate (lysophosphatidic acid or LPA) by incorporating an acyl moiety at the sn-1 position of the glycerol backbone. Active against both saturated and unsaturated long-chain fatty acyl-CoAs. Protects cells against lipotoxicity. This chain is Glycerol-3-phosphate acyltransferase 4, found in Bos taurus (Bovine).